We begin with the raw amino-acid sequence, 549 residues long: Cytoplasmic trehalase (549 aa).

Substrate is bound by residues Arg168, 175 to 176, Asn212, 221 to 223, 292 to 294, and Gly324; these read WD, RSQ, and RDE. Catalysis depends on proton donor/acceptor residues Asp326 and Glu509. Glu525 contributes to the substrate binding site.

Belongs to the glycosyl hydrolase 37 family. Monomer.

Its subcellular location is the cytoplasm. It carries out the reaction alpha,alpha-trehalose + H2O = alpha-D-glucose + beta-D-glucose. The protein operates within glycan degradation; trehalose degradation; D-glucose from alpha,alpha-trehalose: step 1/1. In terms of biological role, hydrolyzes trehalose to glucose. Could be involved, in cells returning to low osmolarity conditions, in the utilization of the accumulated cytoplasmic trehalose, which was synthesized in response to high osmolarity. This Escherichia coli O139:H28 (strain E24377A / ETEC) protein is Cytoplasmic trehalase.